Here is a 1008-residue protein sequence, read N- to C-terminus: PWWP domain-containing protein 3 (1008 aa).

Residues 78-122 adopt a coiled-coil conformation; sequence VSSLLKLKEDVEEEEEEEEEEEEEEEDGEDEEEEEEEEEEEEEEE. Positions 84-124 are disordered; that stretch reads LKEDVEEEEEEEEEEEEEEEDGEDEEEEEEEEEEEEEEEHG. Acidic residues predominate over residues 87–122; that stretch reads DVEEEEEEEEEEEEEEEDGEDEEEEEEEEEEEEEEE. One can recognise a PWWP domain in the interval 127–188; sequence VGDFVWGKIK…ASQLKPFAES (62 aa). Disordered stretches follow at residues 307-339, 399-606, and 668-874; these read EYHE…GLQW, ETEP…LGQE, and NHKF…GPGS. A compositionally biased stretch (acidic residues) spans 321–330; it reads NNDDDDDDEE. Over residues 399 to 409 the composition is skewed to basic and acidic residues; the sequence is ETEPADGDVKS. Over residues 473–490 the composition is skewed to acidic residues; it reads DDGDDDGSGDKEESEEKE. Composition is skewed to basic and acidic residues over residues 511–522, 677–687, and 707–725; these read RFDDSVVERSTE, SSDKEKEELSE, and QKAE…TDKH. Over residues 726 to 738 the composition is skewed to basic residues; it reads GKMKKERKRKKSE. Composition is skewed to basic and acidic residues over residues 739-758, 768-787, and 794-818; these read SKKE…ESTK, SKKQ…ESTK, and NPES…ESTK. 3 consecutive short sequence motifs (nuclear localization signal) follow at residues 786 to 793, 809 to 816, and 841 to 848; these read TKKERKRK, TRKESVES, and EKKKKKKR. The stretch at 804 to 824 forms a coiled coil; sequence VEEEETRKESVESTKKERKRK. A compositionally biased stretch (basic residues) spans 842-854; that stretch reads KKKKKKREGKSKK.

The protein belongs to the PDP family. Interacts with DEK3. Binds to LHP1, MSI4/FVE and MSI5. Component of the PRC2 (polycomb repressive complex 2) complex which regulates histone methylation on histone H3K27.

Its subcellular location is the nucleus. Functionally, together with PDP1, PDP2 and PDP6, interacts with MSI4/FVE and MSI5 to suppress FLC, MAF4 and MAF5 expression by regulating the function of the PRC2 complex and modulating H3K27me3 level, thereby promoting flowering. This Arabidopsis thaliana (Mouse-ear cress) protein is PWWP domain-containing protein 3.